The primary structure comprises 429 residues: C4-dicarboxylate transport protein (429 aa).

Helical transmembrane passes span 3 to 23, 44 to 64, 76 to 96, 144 to 164, 184 to 204, 222 to 242, 331 to 351, and 352 to 372; these read VSIF…GVLL, LIKM…IAGM, IALL…LVVV, AFAS…GFAL, VIFG…FGAM, LILC…GTIA, TLLV…GSGF, and IVLA…LALI.

It belongs to the dicarboxylate/amino acid:cation symporter (DAACS) (TC 2.A.23) family.

Its subcellular location is the cell inner membrane. Functionally, responsible for the transport of dicarboxylates such as succinate, fumarate, and malate from the periplasm across the membrane. This chain is C4-dicarboxylate transport protein, found in Yersinia pestis bv. Antiqua (strain Antiqua).